Here is a 302-residue protein sequence, read N- to C-terminus: MNSLPLHLLDQILFRLEPKSLAMMKSTNRTINSHISDPLFESEYFSRLESSLYNLSPGGARYVMCQPLVSSCKSMSMGEKAIQGNFRCYMLGSCSGLLLLYIGGLFVANPLTKRFRYLDPSGSKFIPTLSGDRWIYLAHPERAMCVGFAVDRKRFKIVCILEMETRYEFEINDGDSWRLSKTTINADSKSDLTKWMKPVYLEGTLHWLRNDGSIIAFNPETEQARLIPSGFHQEVPDMKLLLAADDKINRLTLISGTKQTISVYTLLGNLKWGLARRIKNVSLKENELNAGTWLCTMASVFW.

The region spanning 1-48 is the F-box domain; it reads MNSLPLHLLDQILFRLEPKSLAMMKSTNRTINSHISDPLFESEYFSRL.

The sequence is that of F-box protein At1g20360 from Arabidopsis thaliana (Mouse-ear cress).